Here is a 557-residue protein sequence, read N- to C-terminus: Potassium-transporting ATPase potassium-binding subunit (557 aa).

The next 12 helical transmembrane spans lie at G5 to S25, L63 to G83, G132 to I152, L170 to I190, F253 to V273, L283 to V303, V329 to A349, A356 to V376, G379 to G399, L416 to M436, L484 to A504, and L526 to A546.

The protein belongs to the KdpA family. In terms of assembly, the system is composed of three essential subunits: KdpA, KdpB and KdpC.

Its subcellular location is the cell inner membrane. In terms of biological role, part of the high-affinity ATP-driven potassium transport (or Kdp) system, which catalyzes the hydrolysis of ATP coupled with the electrogenic transport of potassium into the cytoplasm. This subunit binds the periplasmic potassium ions and delivers the ions to the membrane domain of KdpB through an intramembrane tunnel. This Escherichia coli O127:H6 (strain E2348/69 / EPEC) protein is Potassium-transporting ATPase potassium-binding subunit.